Consider the following 118-residue polypeptide: BLOC-1-related complex subunit 8 (118 aa).

Residues 98 to 107 are compositionally biased toward polar residues; sequence KEQISNSQGR. Residues 98-118 form a disordered region; the sequence is KEQISNSQGRSPHVSAPSASS.

It belongs to the BORCS8 family.

It is found in the lysosome membrane. In terms of biological role, as part of a BORC-like complex, it may play a role in the movement and localization of lysosomes at the cell periphery. Associated with the cytosolic face of lysosomes, this complex may couple lysosomes to microtubule plus-end-directed kinesin motors, driving lysosome movement toward the cell periphery. In Tetraodon nigroviridis (Spotted green pufferfish), this protein is BLOC-1-related complex subunit 8.